The chain runs to 692 residues: Elongation factor G (692 aa).

Residues 8–282 enclose the tr-type G domain; it reads ENTRNIGIMA…AVIDYLPSPV (275 aa). Residues 17 to 24, 81 to 85, and 135 to 138 contribute to the GTP site; these read AHIDAGKT, DTPGH, and NKMD.

It belongs to the TRAFAC class translation factor GTPase superfamily. Classic translation factor GTPase family. EF-G/EF-2 subfamily.

The protein localises to the cytoplasm. Its function is as follows. Catalyzes the GTP-dependent ribosomal translocation step during translation elongation. During this step, the ribosome changes from the pre-translocational (PRE) to the post-translocational (POST) state as the newly formed A-site-bound peptidyl-tRNA and P-site-bound deacylated tRNA move to the P and E sites, respectively. Catalyzes the coordinated movement of the two tRNA molecules, the mRNA and conformational changes in the ribosome. In Lysinibacillus sphaericus (strain C3-41), this protein is Elongation factor G.